The following is a 132-amino-acid chain: Small ribosomal subunit protein uS9 (132 aa).

This sequence belongs to the universal ribosomal protein uS9 family.

The chain is Small ribosomal subunit protein uS9 from Leptospira borgpetersenii serovar Hardjo-bovis (strain JB197).